Consider the following 274-residue polypeptide: 3-methyl-2-oxobutanoate hydroxymethyltransferase (274 aa).

Mg(2+) is bound by residues D54 and D93. Residues 54–55 (DS), D93, and K121 contribute to the 3-methyl-2-oxobutanoate site. E123 contributes to the Mg(2+) binding site. Catalysis depends on E190, which acts as the Proton acceptor.

It belongs to the PanB family. In terms of assembly, homodecamer; pentamer of dimers. It depends on Mg(2+) as a cofactor.

The protein resides in the cytoplasm. The catalysed reaction is 3-methyl-2-oxobutanoate + (6R)-5,10-methylene-5,6,7,8-tetrahydrofolate + H2O = 2-dehydropantoate + (6S)-5,6,7,8-tetrahydrofolate. Its pathway is cofactor biosynthesis; (R)-pantothenate biosynthesis; (R)-pantoate from 3-methyl-2-oxobutanoate: step 1/2. Its function is as follows. Catalyzes the reversible reaction in which hydroxymethyl group from 5,10-methylenetetrahydrofolate is transferred onto alpha-ketoisovalerate to form ketopantoate. This Ralstonia nicotianae (strain ATCC BAA-1114 / GMI1000) (Ralstonia solanacearum) protein is 3-methyl-2-oxobutanoate hydroxymethyltransferase.